The sequence spans 177 residues: NAD(P)H-quinone oxidoreductase subunit 6, chloroplastic (177 aa).

A run of 5 helical transmembrane segments spans residues 10-30 (ILVV…VLFT), 33-53 (IYSA…YILL), 61-81 (AQLL…VMFM), 92-112 (LWTV…FLLI), and 152-172 (FFLP…GAIS).

The protein belongs to the complex I subunit 6 family. As to quaternary structure, NDH is composed of at least 16 different subunits, 5 of which are encoded in the nucleus.

It is found in the plastid. Its subcellular location is the chloroplast thylakoid membrane. The enzyme catalyses a plastoquinone + NADH + (n+1) H(+)(in) = a plastoquinol + NAD(+) + n H(+)(out). The catalysed reaction is a plastoquinone + NADPH + (n+1) H(+)(in) = a plastoquinol + NADP(+) + n H(+)(out). NDH shuttles electrons from NAD(P)H:plastoquinone, via FMN and iron-sulfur (Fe-S) centers, to quinones in the photosynthetic chain and possibly in a chloroplast respiratory chain. The immediate electron acceptor for the enzyme in this species is believed to be plastoquinone. Couples the redox reaction to proton translocation, and thus conserves the redox energy in a proton gradient. The chain is NAD(P)H-quinone oxidoreductase subunit 6, chloroplastic (ndhG) from Lemna minor (Common duckweed).